Here is a 778-residue protein sequence, read N- to C-terminus: Actin-binding LIM protein 1 (778 aa).

4 LIM zinc-binding domains span residues 97–156, 156–216, 224–283, and 283–343; these read IHCH…MYGT, TRCH…MSSS, SNCA…LFGV, and VKCE…TKTE. Residue Ser-216 is modified to Phosphoserine. Residues 339-370 form a disordered region; that stretch reads STKTEEKLRPTRTSSESIYSRPGSSIPGSPGH. A compositionally biased stretch (low complexity) spans 360 to 369; the sequence is PGSSIPGSPG. Ser-367 is modified (phosphoserine). Tyr-373 and Tyr-396 each carry phosphotyrosine. 2 disordered regions span residues 414–510 and 552–597; these read YDDK…QAPK and AAQA…EELL. 3 positions are modified to phosphoserine: Ser-422, Ser-426, and Ser-431. The segment covering 423–434 has biased composition (polar residues); that stretch reads LGESPRTLSPTP. Thr-433 carries the post-translational modification Phosphothreonine. Phosphoserine is present on Ser-435. Tyr-439 is subject to Phosphotyrosine. The segment covering 449–474 has biased composition (polar residues); it reads RSTSQGSINSPVYSRHSYTPTTSRSP. Ser-452, Ser-455, Ser-458, Ser-498, and Ser-587 each carry phosphoserine. Positions 590–614 form a coiled coil; the sequence is EEDDEELLRRRQLQEEQLMKLNSGL. Residue Lys-620 forms a Glycyl lysine isopeptide (Lys-Gly) (interchain with G-Cter in SUMO2) linkage. Phosphoserine occurs at positions 640, 655, 677, and 706. The region spanning 710–778 is the HP domain; it reads MLEPKIFPYE…NDMKKKAKLF (69 aa).

In terms of assembly, binds F-actin. Interacts with ABRA. In terms of tissue distribution, detected in liver, heart, skeletal muscle, brain and retina, where it is concentrated in the inner segment and in the outer plexiform layers.

The protein localises to the cytoplasm. It localises to the cytoskeleton. May act as scaffold protein. May play a role in the development of the retina. Has been suggested to play a role in axon guidance. This is Actin-binding LIM protein 1 (ABLIM1) from Homo sapiens (Human).